We begin with the raw amino-acid sequence, 890 residues long: Alanine--tRNA ligase (890 aa).

Zn(2+) is bound by residues histidine 564, histidine 568, cysteine 677, and histidine 681.

Belongs to the class-II aminoacyl-tRNA synthetase family. It depends on Zn(2+) as a cofactor.

The protein resides in the cytoplasm. The catalysed reaction is tRNA(Ala) + L-alanine + ATP = L-alanyl-tRNA(Ala) + AMP + diphosphate. Its function is as follows. Catalyzes the attachment of alanine to tRNA(Ala) in a two-step reaction: alanine is first activated by ATP to form Ala-AMP and then transferred to the acceptor end of tRNA(Ala). Also edits incorrectly charged Ser-tRNA(Ala) and Gly-tRNA(Ala) via its editing domain. The protein is Alanine--tRNA ligase of Rhodopseudomonas palustris (strain BisB18).